A 333-amino-acid polypeptide reads, in one-letter code: Glycerol-3-phosphate dehydrogenase [NAD(P)+] (333 aa).

5 residues coordinate NADPH: Ser10, Trp11, His31, Arg32, and Lys105. Sn-glycerol 3-phosphate is bound by residues Lys105, Gly136, and Ser138. Ala140 is a binding site for NADPH. 5 residues coordinate sn-glycerol 3-phosphate: Lys191, Asp244, Ser254, Arg255, and Asn256. Residue Lys191 is the Proton acceptor of the active site. Arg255 lines the NADPH pocket. Val279 and Glu281 together coordinate NADPH.

It belongs to the NAD-dependent glycerol-3-phosphate dehydrogenase family.

It localises to the cytoplasm. It carries out the reaction sn-glycerol 3-phosphate + NAD(+) = dihydroxyacetone phosphate + NADH + H(+). It catalyses the reaction sn-glycerol 3-phosphate + NADP(+) = dihydroxyacetone phosphate + NADPH + H(+). It participates in membrane lipid metabolism; glycerophospholipid metabolism. In terms of biological role, catalyzes the reduction of the glycolytic intermediate dihydroxyacetone phosphate (DHAP) to sn-glycerol 3-phosphate (G3P), the key precursor for phospholipid synthesis. The sequence is that of Glycerol-3-phosphate dehydrogenase [NAD(P)+] from Chlorobium limicola (strain DSM 245 / NBRC 103803 / 6330).